Here is a 527-residue protein sequence, read N- to C-terminus: 4-alpha-glucanotransferase (527 aa).

The protein belongs to the disproportionating enzyme family.

Its subcellular location is the cytoplasm. It carries out the reaction Transfers a segment of a (1-&gt;4)-alpha-D-glucan to a new position in an acceptor, which may be glucose or a (1-&gt;4)-alpha-D-glucan.. The chain is 4-alpha-glucanotransferase (malQ) from Chlamydia trachomatis serovar D (strain ATCC VR-885 / DSM 19411 / UW-3/Cx).